We begin with the raw amino-acid sequence, 460 residues long: Cyclic 2,3-diphosphoglycerate synthetase (460 aa).

In terms of assembly, homodimer.

The protein localises to the cytoplasm. The enzyme catalyses (2R)-2,3-bisphosphoglycerate + ATP + H(+) = cyclic (2R)-2,3-bisphosphoglycerate + ADP + phosphate. Its function is as follows. Catalyzes the formation of cyclic 2,3-diphosphoglycerate (cDPG) by formation of an intramolecular phosphoanhydride bond at the expense of ATP. It is also able to catalyze the hydrolysis of cDPG but with significant slower rates (8-10 times). May be involved in thermoadaptation. The sequence is that of Cyclic 2,3-diphosphoglycerate synthetase (cpgS) from Methanothermus fervidus (strain ATCC 43054 / DSM 2088 / JCM 10308 / V24 S).